A 468-amino-acid polypeptide reads, in one-letter code: 6-phosphogluconate dehydrogenase, decarboxylating (468 aa).

Residues 9 to 14 (GLAVMG), 32 to 34 (NRS), 73 to 75 (VKA), and asparagine 101 contribute to the NADP(+) site. Substrate contacts are provided by residues asparagine 101 and 127-129 (SGG). Residue lysine 182 is the Proton acceptor of the active site. 185 to 186 (HN) contributes to the substrate binding site. The active-site Proton donor is the glutamate 189. 5 residues coordinate substrate: tyrosine 190, lysine 259, arginine 286, arginine 444, and histidine 450.

The protein belongs to the 6-phosphogluconate dehydrogenase family. In terms of assembly, homodimer.

It carries out the reaction 6-phospho-D-gluconate + NADP(+) = D-ribulose 5-phosphate + CO2 + NADPH. Its pathway is carbohydrate degradation; pentose phosphate pathway; D-ribulose 5-phosphate from D-glucose 6-phosphate (oxidative stage): step 3/3. In terms of biological role, catalyzes the oxidative decarboxylation of 6-phosphogluconate to ribulose 5-phosphate and CO(2), with concomitant reduction of NADP to NADPH. In Staphylococcus epidermidis (strain ATCC 35984 / DSM 28319 / BCRC 17069 / CCUG 31568 / BM 3577 / RP62A), this protein is 6-phosphogluconate dehydrogenase, decarboxylating (gnd).